We begin with the raw amino-acid sequence, 320 residues long: Methionyl-tRNA formyltransferase (320 aa).

111 to 114 (SLLP) is a (6S)-5,6,7,8-tetrahydrofolate binding site.

The protein belongs to the Fmt family.

The catalysed reaction is L-methionyl-tRNA(fMet) + (6R)-10-formyltetrahydrofolate = N-formyl-L-methionyl-tRNA(fMet) + (6S)-5,6,7,8-tetrahydrofolate + H(+). In terms of biological role, attaches a formyl group to the free amino group of methionyl-tRNA(fMet). The formyl group appears to play a dual role in the initiator identity of N-formylmethionyl-tRNA by promoting its recognition by IF2 and preventing the misappropriation of this tRNA by the elongation apparatus. The chain is Methionyl-tRNA formyltransferase from Bifidobacterium adolescentis (strain ATCC 15703 / DSM 20083 / NCTC 11814 / E194a).